Here is a 337-residue protein sequence, read N- to C-terminus: MFSKKPHGDVKKSTQKVLDTKKDALTRLKHLRIVIENAESIDLKQFFDQHFSHIYYVFFENFVTIEASLKQKGHKSQREELDAILFIFEKILQLLPERIHQRWQFHSIGLILKKLLHTGNSLKIRREGVRLFLLWLQALQNNCSREQLWMFSCLIPGFSAPQSEYGPRTLDNLINPPLNLQETQVTIEEITPLVPPQSGDKGQEDLTSYFLEALLKYIVIQVKSLEWKNKENQERGFSFLFSHFKKYYLPYIFPNICKENSLYHPVLDIPQMRPKPHYVMIKKDAETNEAIYCTKEPFIKARVIVIRWLVSFWLEPKPHTGPHIPGMEGEVLPKNIQ.

Component of the heterodimeric RalGAP1 complex with RALGAPB. Heterodimerization is required for activity. Interacts with the HLH region of TCF3/isoform E12.

It localises to the cytoplasm. It is found in the nucleus. Functionally, catalytic subunit of the heterodimeric RalGAP1 complex which acts as a GTPase activator for the Ras-like small GTPases RALA and RALB. The chain is Ral GTPase-activating protein subunit alpha-1 from Sus scrofa (Pig).